Consider the following 281-residue polypeptide: Inositol-pentakisphosphate 2-kinase (281 aa).

The short motif at 123-127 (ELKPK) is the EXKPK motif element.

The protein belongs to the IPK1 type 1 family.

It localises to the nucleus. The enzyme catalyses 1D-myo-inositol 1,3,4,5,6-pentakisphosphate + ATP = 1D-myo-inositol hexakisphosphate + ADP + H(+). Its function is as follows. Has kinase activity and phosphorylates inositol-1,3,4,5,6-pentakisphosphate (Ins(1,3,4,5,6)P5) to produce 1,2,3,4,5,6-hexakisphosphate (InsP6), also known as phytate. This chain is Inositol-pentakisphosphate 2-kinase (IPK1), found in Saccharomyces cerevisiae (strain ATCC 204508 / S288c) (Baker's yeast).